The chain runs to 171 residues: NADH-quinone oxidoreductase subunit B 2 (171 aa).

C37, C38, C102, and C132 together coordinate [4Fe-4S] cluster.

Belongs to the complex I 20 kDa subunit family. In terms of assembly, NDH-1 is composed of 14 different subunits. Subunits NuoB, C, D, E, F, and G constitute the peripheral sector of the complex. The cofactor is [4Fe-4S] cluster.

Its subcellular location is the cell inner membrane. It carries out the reaction a quinone + NADH + 5 H(+)(in) = a quinol + NAD(+) + 4 H(+)(out). In terms of biological role, NDH-1 shuttles electrons from NADH, via FMN and iron-sulfur (Fe-S) centers, to quinones in the respiratory chain. Couples the redox reaction to proton translocation (for every two electrons transferred, four hydrogen ions are translocated across the cytoplasmic membrane), and thus conserves the redox energy in a proton gradient. In Chromobacterium violaceum (strain ATCC 12472 / DSM 30191 / JCM 1249 / CCUG 213 / NBRC 12614 / NCIMB 9131 / NCTC 9757 / MK), this protein is NADH-quinone oxidoreductase subunit B 2.